A 185-amino-acid polypeptide reads, in one-letter code: ATP synthase subunit b (185 aa).

A helical membrane pass occupies residues 28–48; that stretch reads VVLVGFAVLMYIVVKFVVPMF.

Belongs to the ATPase B chain family. F-type ATPases have 2 components, F(1) - the catalytic core - and F(0) - the membrane proton channel. F(1) has five subunits: alpha(3), beta(3), gamma(1), delta(1), epsilon(1). F(0) has three main subunits: a(1), b(2) and c(10-14). The alpha and beta chains form an alternating ring which encloses part of the gamma chain. F(1) is attached to F(0) by a central stalk formed by the gamma and epsilon chains, while a peripheral stalk is formed by the delta and b chains.

The protein localises to the cell membrane. F(1)F(0) ATP synthase produces ATP from ADP in the presence of a proton or sodium gradient. F-type ATPases consist of two structural domains, F(1) containing the extramembraneous catalytic core and F(0) containing the membrane proton channel, linked together by a central stalk and a peripheral stalk. During catalysis, ATP synthesis in the catalytic domain of F(1) is coupled via a rotary mechanism of the central stalk subunits to proton translocation. Its function is as follows. Component of the F(0) channel, it forms part of the peripheral stalk, linking F(1) to F(0). This Paenarthrobacter aurescens (strain TC1) protein is ATP synthase subunit b.